The following is a 168-amino-acid chain: Probable acetolactate synthase small subunit (168 aa).

The 75-residue stretch at 10–84 folds into the ACT domain; that stretch reads IISALVEHKP…DVIKVRDLEP (75 aa).

This sequence belongs to the acetolactate synthase small subunit family. Dimer of large and small chains.

The catalysed reaction is 2 pyruvate + H(+) = (2S)-2-acetolactate + CO2. It functions in the pathway amino-acid biosynthesis; L-isoleucine biosynthesis; L-isoleucine from 2-oxobutanoate: step 1/4. The protein operates within amino-acid biosynthesis; L-valine biosynthesis; L-valine from pyruvate: step 1/4. In Methanothermobacter thermautotrophicus (strain ATCC 29096 / DSM 1053 / JCM 10044 / NBRC 100330 / Delta H) (Methanobacterium thermoautotrophicum), this protein is Probable acetolactate synthase small subunit (ilvH).